Here is a 337-residue protein sequence, read N- to C-terminus: tRNA N6-adenosine threonylcarbamoyltransferase (337 aa).

The Fe cation site is built by H111 and H115. Residues L134–G138, D167, G180, and N272 each bind substrate. D300 is a binding site for Fe cation.

This sequence belongs to the KAE1 / TsaD family. It depends on Fe(2+) as a cofactor.

It is found in the cytoplasm. The enzyme catalyses L-threonylcarbamoyladenylate + adenosine(37) in tRNA = N(6)-L-threonylcarbamoyladenosine(37) in tRNA + AMP + H(+). Its function is as follows. Required for the formation of a threonylcarbamoyl group on adenosine at position 37 (t(6)A37) in tRNAs that read codons beginning with adenine. Is involved in the transfer of the threonylcarbamoyl moiety of threonylcarbamoyl-AMP (TC-AMP) to the N6 group of A37, together with TsaE and TsaB. TsaD likely plays a direct catalytic role in this reaction. In Pectobacterium atrosepticum (strain SCRI 1043 / ATCC BAA-672) (Erwinia carotovora subsp. atroseptica), this protein is tRNA N6-adenosine threonylcarbamoyltransferase.